We begin with the raw amino-acid sequence, 470 residues long: Cysteine--tRNA ligase (470 aa).

Cysteine 28 provides a ligand contact to Zn(2+). The short motif at 30-40 (PTVYNYIHIGN) is the 'HIGH' region element. Zn(2+) contacts are provided by cysteine 211, histidine 236, and glutamate 240. Positions 270–274 (KMSKS) match the 'KMSKS' region motif. Residue lysine 273 coordinates ATP.

It belongs to the class-I aminoacyl-tRNA synthetase family. As to quaternary structure, monomer. Requires Zn(2+) as cofactor.

The protein localises to the cytoplasm. The enzyme catalyses tRNA(Cys) + L-cysteine + ATP = L-cysteinyl-tRNA(Cys) + AMP + diphosphate. This Enterococcus faecalis (strain ATCC 700802 / V583) protein is Cysteine--tRNA ligase.